A 267-amino-acid polypeptide reads, in one-letter code: Tryptophan synthase alpha chain (267 aa).

Residues E49 and D60 each act as proton acceptor in the active site.

It belongs to the TrpA family. In terms of assembly, tetramer of two alpha and two beta chains.

It catalyses the reaction (1S,2R)-1-C-(indol-3-yl)glycerol 3-phosphate + L-serine = D-glyceraldehyde 3-phosphate + L-tryptophan + H2O. It participates in amino-acid biosynthesis; L-tryptophan biosynthesis; L-tryptophan from chorismate: step 5/5. The alpha subunit is responsible for the aldol cleavage of indoleglycerol phosphate to indole and glyceraldehyde 3-phosphate. This Geobacter sp. (strain M21) protein is Tryptophan synthase alpha chain.